Consider the following 244-residue polypeptide: Type III pantothenate kinase (244 aa).

Residue 9–16 participates in ATP binding; that stretch reads DAGNSSLK. Residues Y90 and 97–100 each bind substrate; that span reads GVDR. D99 (proton acceptor) is an active-site residue. An ATP-binding site is contributed by T122. Residue T172 coordinates substrate.

The protein belongs to the type III pantothenate kinase family. In terms of assembly, homodimer. NH4(+) is required as a cofactor. The cofactor is K(+).

The protein resides in the cytoplasm. It carries out the reaction (R)-pantothenate + ATP = (R)-4'-phosphopantothenate + ADP + H(+). Its pathway is cofactor biosynthesis; coenzyme A biosynthesis; CoA from (R)-pantothenate: step 1/5. Its function is as follows. Catalyzes the phosphorylation of pantothenate (Pan), the first step in CoA biosynthesis. The chain is Type III pantothenate kinase from Thiobacillus denitrificans (strain ATCC 25259 / T1).